A 243-amino-acid polypeptide reads, in one-letter code: Ubiquinone biosynthesis O-methyltransferase (243 aa).

The S-adenosyl-L-methionine site is built by arginine 44, glycine 64, aspartate 85, and methionine 129.

This sequence belongs to the methyltransferase superfamily. UbiG/COQ3 family.

It catalyses the reaction a 3-demethylubiquinol + S-adenosyl-L-methionine = a ubiquinol + S-adenosyl-L-homocysteine + H(+). The enzyme catalyses a 3-(all-trans-polyprenyl)benzene-1,2-diol + S-adenosyl-L-methionine = a 2-methoxy-6-(all-trans-polyprenyl)phenol + S-adenosyl-L-homocysteine + H(+). It functions in the pathway cofactor biosynthesis; ubiquinone biosynthesis. Functionally, O-methyltransferase that catalyzes the 2 O-methylation steps in the ubiquinone biosynthetic pathway. In Cronobacter sakazakii (strain ATCC BAA-894) (Enterobacter sakazakii), this protein is Ubiquinone biosynthesis O-methyltransferase.